A 646-amino-acid chain; its full sequence is Capsid scaffolding protein (646 aa).

Catalysis depends on charge relay system residues H55, S123, and H142. Residues 336–355 are interaction with pAP; the sequence is GDYILVPAAQYNQLVVGQHT. The segment at 421 to 483 is disordered; it reads TKGSDPHVIQ…RPGERRAGRP (63 aa). The Nuclear localization signal signature appears at 445-451; sequence RYARKRR. Composition is skewed to basic and acidic residues over residues 452-462 and 471-480; these read HDWDATTRDDL and RSPRPGERRA. The tract at residues 626–646 is interaction with major capsid protein; it reads TGLEFGRDDADIFVSQMMSAR.

The protein belongs to the herpesviridae capsid scaffolding protein family. Homomultimer. Interacts with major capsid protein. In terms of assembly, exists in a monomer-dimer equilibrium with the dimer being the active species. Post-translationally, capsid scaffolding protein is cleaved by assemblin after formation of the spherical procapsid. As a result, the capsid obtains its mature, icosahedral shape. Cleavages occur at two or more sites: release (R-site) and maturation (M-site).

Its subcellular location is the host cytoplasm. The protein resides in the host nucleus. It catalyses the reaction Cleaves -Ala-|-Ser- and -Ala-|-Ala- bonds in the scaffold protein.. In terms of biological role, acts as a scaffold protein by binding major capsid protein in the cytoplasm, inducing the nuclear localization of both proteins. Multimerizes in the nucleus such as major capsid protein forms the icosahedral T=16 capsid. Autocatalytic cleavage releases the assembly protein, and subsequently abolishes interaction with major capsid protein. Cleavages products are evicted from the capsid before or during DNA packaging. Its function is as follows. Protease that plays an essential role in virion assembly within the nucleus. Catalyzes the cleavage of the assembly protein after formation of the spherical procapsid. By that cleavage, the capsid matures and gains its icosahedral shape. The cleavage sites seem to include -Ala-Ser-, -Ala-Ala-, as well as Ala-Thr bonds. Assemblin and cleavages products are evicted from the capsid before or during DNA packaging. Functionally, plays a major role in capsid assembly. Acts as a scaffold protein by binding major capsid protein. Multimerizes in the nucleus such as major capsid protein forms the icosahedral T=16 capsid. Cleaved by assemblin after capsid completion. The cleavages products are evicted from the capsid before or during DNA packaging. This is Capsid scaffolding protein (35) from Equus caballus (Horse).